Consider the following 210-residue polypeptide: Thymidylate kinase (210 aa).

10-17 (GLEGAGKS) contributes to the ATP binding site.

The protein belongs to the thymidylate kinase family.

It carries out the reaction dTMP + ATP = dTDP + ADP. In terms of biological role, phosphorylation of dTMP to form dTDP in both de novo and salvage pathways of dTTP synthesis. This is Thymidylate kinase from Haemophilus influenzae (strain PittGG).